The following is a 133-amino-acid chain: METNKLYECTVIIDGGLQDEAIAAAMEMVQKVITEKGGSISSVLDIGRRKTAYPIKKKTIGSYAHIEFTAATPVIAEIERVLRYEEVLLRYLIVHLTSPLLEMRKRVEKYSVVIGSPEDNVASETDAADKVAK.

This sequence belongs to the bacterial ribosomal protein bS6 family.

Binds together with bS18 to 16S ribosomal RNA. This is Small ribosomal subunit protein bS6 from Chlorobium luteolum (strain DSM 273 / BCRC 81028 / 2530) (Pelodictyon luteolum).